The sequence spans 420 residues: MAKLTAVPLSALVDEPVHIQVTGLAPFQVVCLQASLKDEKGNLFSSQAFYRASEVGEVDLEHDPSLGGDYMGVHPMGLFWSLKPEKLLGRLIKRDVMNSPYQIHIKACHPYFPLQDIVVSPPLDSLTLERWYVAPGVKRIQVKESRIRGALFLPPGEGPFPGVIDLFGGAGGLMEFRASLLASRGFATLALAYWNYDDLPSRLEKVDLEYFEEGVEFLLRHPKVLGPGVGILSVCIGAEIGLSMAINLKQIRATVLINGPNFVSQSPHVYHGQVYPPVPSNEEFVVTNALGLVEFYRTFQETADKDSKYCFPIEKAHGHFLFVVGEDDKNLNSKVHANQAIAQLMKNGKKNWTLLSYPGAGHLIEPPYTPLCQASRMPILIPSLSWGGEVIPHAAAQEHSWKEIQKFLKQHLLPDLSSQL.

Lysine 40 bears the N6-succinyllysine mark. At serine 125 the chain carries Phosphoserine. Active-site charge relay system residues include cysteine 235 and aspartate 328. N6-succinyllysine is present on residues lysine 346 and lysine 350. Histidine 362 serves as the catalytic Charge relay system. Position 409 is an N6-succinyllysine (lysine 409). The residue at position 418 (serine 418) is a Phosphoserine.

The protein belongs to the C/M/P thioester hydrolase family. As to quaternary structure, monomer. As to expression, highly expressed in liver, kidney, gallbladder, proximal intestine and distal intestine. Weakly expressed in adrenal gland, lung, brain and muscle.

It is found in the cytoplasm. The protein localises to the cytosol. The protein resides in the peroxisome. It catalyses the reaction choloyl-CoA + glycine = glycocholate + CoA + H(+). It carries out the reaction hexadecanoyl-CoA + H2O = hexadecanoate + CoA + H(+). The enzyme catalyses choloyl-CoA + H2O = cholate + CoA + H(+). The catalysed reaction is chenodeoxycholoyl-CoA + H2O = chenodeoxycholate + CoA + H(+). It catalyses the reaction eicosanoyl-CoA + H2O = eicosanoate + CoA + H(+). It carries out the reaction octadecanoyl-CoA + H2O = octadecanoate + CoA + H(+). The enzyme catalyses docosanoyl-CoA + H2O = docosanoate + CoA + H(+). The catalysed reaction is tetracosanoyl-CoA + H2O = tetracosanoate + CoA + H(+). It catalyses the reaction hexacosanoyl-CoA + H2O = hexacosanoate + CoA + H(+). It carries out the reaction dodecanoyl-CoA + H2O = dodecanoate + CoA + H(+). The enzyme catalyses tetradecanoyl-CoA + H2O = tetradecanoate + CoA + H(+). The catalysed reaction is choloyl-CoA + taurine = taurocholate + CoA + H(+). It catalyses the reaction chenodeoxycholoyl-CoA + glycine = glycochenodeoxycholate + CoA + H(+). It carries out the reaction chenodeoxycholoyl-CoA + taurine = taurochenodeoxycholate + CoA + H(+). The enzyme catalyses eicosanoyl-CoA + glycine = N-eicosanoylglycinate + CoA + H(+). The catalysed reaction is hexacosanoyl-CoA + glycine = N-hexacosanoylglycine + CoA + H(+). It catalyses the reaction docosanoyl-CoA + glycine = N-docosanoylglycine + CoA + H(+). Catalyzes the amidation of bile acids (BAs) with the amino acid taurine. Selective for taurine conjugation of cholyl CoA and only taurine-conjugated BAs are found in bile. Amidation of BAs in the liver with taurine prior to their excretion into bile is an important biochemical event in bile acid metabolism. This conjugation (or amidation) plays several important biological roles in that it promotes the secretion of BAs and cholesterol into bile and increases the detergent properties of BAs in the intestine, which facilitates lipid and vitamin absorption. May also act as an acyl-CoA thioesterase that regulates intracellular levels of free fatty acids. In vitro, catalyzes the hydrolysis of long- and very long-chain saturated acyl-CoAs to the free fatty acid and coenzyme A (CoASH), and conjugates glycine to these acyl-CoAs. The protein is Bile acid-CoA:amino acid N-acyltransferase (Baat) of Mus musculus (Mouse).